A 291-amino-acid polypeptide reads, in one-letter code: Phosphate import ATP-binding protein PstB (291 aa).

The ABC transporter domain maps to 45–286 (YSTQNLDLWY…PADKQTEDYI (242 aa)). ATP is bound at residue 77 to 84 (GPSGCGKS).

The protein belongs to the ABC transporter superfamily. Phosphate importer (TC 3.A.1.7) family. In terms of assembly, the complex is composed of two ATP-binding proteins (PstB), two transmembrane proteins (PstC and PstA) and a solute-binding protein (PstS).

The protein resides in the cell membrane. It catalyses the reaction phosphate(out) + ATP + H2O = ADP + 2 phosphate(in) + H(+). In terms of biological role, part of the ABC transporter complex PstSACB involved in phosphate import. Responsible for energy coupling to the transport system. This is Phosphate import ATP-binding protein PstB from Staphylococcus epidermidis (strain ATCC 12228 / FDA PCI 1200).